The sequence spans 366 residues: Chorismate synthase (366 aa).

Residues arginine 48 and arginine 54 each contribute to the NADP(+) site. Residues 131 to 133, 243 to 244, glycine 288, 303 to 307, and arginine 329 contribute to the FMN site; these read RAS, NA, and KPTPS.

The protein belongs to the chorismate synthase family. Homotetramer. Requires FMNH2 as cofactor.

The enzyme catalyses 5-O-(1-carboxyvinyl)-3-phosphoshikimate = chorismate + phosphate. Its pathway is metabolic intermediate biosynthesis; chorismate biosynthesis; chorismate from D-erythrose 4-phosphate and phosphoenolpyruvate: step 7/7. Its function is as follows. Catalyzes the anti-1,4-elimination of the C-3 phosphate and the C-6 proR hydrogen from 5-enolpyruvylshikimate-3-phosphate (EPSP) to yield chorismate, which is the branch point compound that serves as the starting substrate for the three terminal pathways of aromatic amino acid biosynthesis. This reaction introduces a second double bond into the aromatic ring system. This chain is Chorismate synthase, found in Bartonella quintana (strain Toulouse) (Rochalimaea quintana).